The following is a 664-amino-acid chain: Lamin tail domain-containing protein 2 (664 aa).

The interval methionine 1–alanine 40 is disordered. Residues glutamine 118–glutamine 169 are a coiled coil. The segment covering serine 245–leucine 260 has biased composition (polar residues). 2 disordered regions span residues serine 245–proline 272 and threonine 286–histidine 329. Over residues threonine 286 to serine 298 the composition is skewed to low complexity. Positions glycine 312–glutamine 325 are enriched in polar residues. In terms of domain architecture, LTD spans proline 362 to proline 481. The disordered stretch occupies residues serine 504–threonine 563. A compositionally biased stretch (basic residues) spans arginine 533–serine 547.

The chain is Lamin tail domain-containing protein 2 (Lmntd2) from Mus musculus (Mouse).